The sequence spans 163 residues: Phosphopantetheine adenylyltransferase (163 aa).

A substrate-binding site is contributed by serine 11. ATP-binding positions include 11 to 12 and histidine 19; that span reads SF. Substrate is bound by residues lysine 43, alanine 76, and arginine 90. Residues 91-93, glutamate 101, and 126-132 each bind ATP; these read GLR and WQALSSS.

This sequence belongs to the bacterial CoaD family. As to quaternary structure, homohexamer. Mg(2+) is required as a cofactor.

The protein localises to the cytoplasm. The catalysed reaction is (R)-4'-phosphopantetheine + ATP + H(+) = 3'-dephospho-CoA + diphosphate. It participates in cofactor biosynthesis; coenzyme A biosynthesis; CoA from (R)-pantothenate: step 4/5. Its function is as follows. Reversibly transfers an adenylyl group from ATP to 4'-phosphopantetheine, yielding dephospho-CoA (dPCoA) and pyrophosphate. The chain is Phosphopantetheine adenylyltransferase from Streptococcus pyogenes serotype M6 (strain ATCC BAA-946 / MGAS10394).